A 461-amino-acid polypeptide reads, in one-letter code: Probable Xaa-Pro aminopeptidase PEPP (461 aa).

Residues D257, D268, E391, and E431 each coordinate Mn(2+).

It belongs to the peptidase M24B family. Mn(2+) is required as a cofactor.

It catalyses the reaction Release of any N-terminal amino acid, including proline, that is linked to proline, even from a dipeptide or tripeptide.. Catalyzes the removal of a penultimate prolyl residue from the N-termini of peptides. In Colletotrichum graminicola (strain M1.001 / M2 / FGSC 10212) (Maize anthracnose fungus), this protein is Probable Xaa-Pro aminopeptidase PEPP (PEPP).